The following is a 507-amino-acid chain: Alkyl hydroperoxide reductase subunit F (507 aa).

Residue 207–222 (DVLIVGGGPASGSAAI) coordinates FAD. The cysteines at positions 335 and 338 are disulfide-linked. 347 to 361 (DVAVIGGGNSGVEAA) lines the NAD(+) pocket. 467–477 (TNVPGIFAAGD) provides a ligand contact to FAD.

Belongs to the class-II pyridine nucleotide-disulfide oxidoreductase family. In terms of assembly, homodimer. Requires FAD as cofactor.

Its function is as follows. Serves to protect the cell against DNA damage by alkyl hydroperoxides. It can use either NADH or NADPH as electron donor for direct reduction of redox dyes or of alkyl hydroperoxides when combined with the AhpC protein. The polypeptide is Alkyl hydroperoxide reductase subunit F (ahpF) (Staphylococcus epidermidis (strain ATCC 35984 / DSM 28319 / BCRC 17069 / CCUG 31568 / BM 3577 / RP62A)).